Here is a 354-residue protein sequence, read N- to C-terminus: UPF0425 pyridoxal phosphate-dependent protein MMP0002 (354 aa).

Lys210 is modified (N6-(pyridoxal phosphate)lysine).

It belongs to the UPF0425 family. The cofactor is pyridoxal 5'-phosphate.

This Methanococcus maripaludis (strain DSM 14266 / JCM 13030 / NBRC 101832 / S2 / LL) protein is UPF0425 pyridoxal phosphate-dependent protein MMP0002.